The sequence spans 146 residues: VHLTADEKSAVTGLWGKVNVEEVGGEALGRLLVVYPWTQRFFESFGDLSNAGAVMGNAKVKAHGKKVLNAFSDGLKNLDNLKGTFAKLSELHCDKLHVDPENFRLLGNVLMIVLARHFGKEFCPPVQAAFQKVSLGVATALGHKYH.

Position 1 is an N-acetylvaline (V1). Residues 2–146 form the Globin domain; it reads HLTADEKSAV…VATALGHKYH (145 aa). The residue at position 12 (T12) is a Phosphothreonine. A Phosphoserine modification is found at S44. An N6-acetyllysine modification is found at K59. Position 63 (H63) interacts with heme b. N6-acetyllysine is present on K82. H92 is a binding site for heme b. C93 carries the S-nitrosocysteine modification. N6-acetyllysine is present on K144.

This sequence belongs to the globin family. As to quaternary structure, heterotetramer of two alpha chains and two beta chains. Red blood cells.

Functionally, involved in oxygen transport from the lung to the various peripheral tissues. This Antrozous pallidus (Pallid bat) protein is Hemoglobin subunit beta (HBB).